Reading from the N-terminus, the 304-residue chain is MWFKNLTLYRFNKPFAVETEALETALADFTFSPCSSQDISKFGFSNALGKKGSSLVHSANNRHLICATKEEKMLPGQVIKEALEEKVALIEDEENRKLAKKEKDALKDEIITSLLPRAFSRRSQTRALILPELEMILVDSSSATKAEELLALLRKALGSLPVIPLSFKAPVESHLTEWLKNGSAPLPFEMQDEAELKSEADEGGIVRFKQQDLKEDEVLAHLATGKQVHKLALHFGQSIALLLQSDASVKRLKFSEEFRAGNDEVGTDDPMARLDADFALMGSELVALMHALVSALGGLEETQD.

The protein belongs to the RdgC family.

The protein resides in the cytoplasm. It localises to the nucleoid. Functionally, may be involved in recombination. In Shewanella sp. (strain W3-18-1), this protein is Recombination-associated protein RdgC.